The chain runs to 172 residues: Signal peptidase complex catalytic subunit SEC11 (172 aa).

Residues 1–14 (MLSSLQNPRQAAAQ) lie on the Cytoplasmic side of the membrane. A helical; Signal-anchor for type II membrane protein membrane pass occupies residues 15-35 (LMNFGLILSTAFMMWKGLSVI). Over 36-172 (TDSPSPIVVV…MGLVVVLQRE (137 aa)) the chain is Lumenal. Active-site charge relay system residues include S49, H90, and D115. Residues 158–169 (VMLGIMGLVVVL) form a C-terminal short (CTS) helix region.

Belongs to the peptidase S26B family. Component of the signal peptidase complex (SPC) composed of a catalytic subunit SEC11 and three accessory subunits SPC1, SPC2 and SPC3. The complex induces a local thinning of the ER membrane which is used to measure the length of the signal peptide (SP) h-region of protein substrates. This ensures the selectivity of the complex towards h-regions shorter than 18-20 amino acids. SPC associates with the translocon complex.

The protein localises to the endoplasmic reticulum membrane. The enzyme catalyses Cleavage of hydrophobic, N-terminal signal or leader sequences from secreted and periplasmic proteins.. Its function is as follows. Catalytic component of the signal peptidase complex (SPC) which catalyzes the cleavage of N-terminal signal sequences from nascent proteins as they are translocated into the lumen of the endoplasmic reticulum. Specifically cleaves N-terminal signal peptides that contain a hydrophobic alpha-helix (h-region) shorter than 18-20 amino acids. This is Signal peptidase complex catalytic subunit SEC11 (SEC11) from Chaetomium globosum (strain ATCC 6205 / CBS 148.51 / DSM 1962 / NBRC 6347 / NRRL 1970) (Soil fungus).